The sequence spans 164 residues: ATP synthase subunit b 1 (164 aa).

A helical membrane pass occupies residues 8 to 28 (PETWVAIAFVILMGLFAYLGV).

It belongs to the ATPase B chain family. As to quaternary structure, F-type ATPases have 2 components, F(1) - the catalytic core - and F(0) - the membrane proton channel. F(1) has five subunits: alpha(3), beta(3), gamma(1), delta(1), epsilon(1). F(0) has three main subunits: a(1), b(2) and c(10-14). The alpha and beta chains form an alternating ring which encloses part of the gamma chain. F(1) is attached to F(0) by a central stalk formed by the gamma and epsilon chains, while a peripheral stalk is formed by the delta and b chains.

It is found in the cell inner membrane. Its function is as follows. F(1)F(0) ATP synthase produces ATP from ADP in the presence of a proton or sodium gradient. F-type ATPases consist of two structural domains, F(1) containing the extramembraneous catalytic core and F(0) containing the membrane proton channel, linked together by a central stalk and a peripheral stalk. During catalysis, ATP synthesis in the catalytic domain of F(1) is coupled via a rotary mechanism of the central stalk subunits to proton translocation. In terms of biological role, component of the F(0) channel, it forms part of the peripheral stalk, linking F(1) to F(0). The protein is ATP synthase subunit b 1 of Bradyrhizobium sp. (strain ORS 278).